Reading from the N-terminus, the 354-residue chain is Putative F-box/kelch-repeat protein At5g03000 (354 aa).

The F-box domain occupies 37–86 (PTVFSSLPDELILNCLARVSRFYRPSLSLVNKEFQSLIASPDLEATRSRI). 2 Kelch repeats span residues 143–189 (EIYI…VIDG) and 190–236 (KIYV…FPGK).

This Arabidopsis thaliana (Mouse-ear cress) protein is Putative F-box/kelch-repeat protein At5g03000.